Reading from the N-terminus, the 54-residue chain is UPF0434 protein BCI_0256 (54 aa).

The protein belongs to the UPF0434 family.

The sequence is that of UPF0434 protein BCI_0256 from Baumannia cicadellinicola subsp. Homalodisca coagulata.